The sequence spans 670 residues: Protein ACCELERATED CELL DEATH 6 (670 aa).

Topologically, residues 1-456 (MDSSGADLDR…PNYIFHERWT (456 aa)) are cytoplasmic. Residues 18 to 47 (LVSHDQRKDFSHSGGVGTTSPTGDTEPVPK) form a disordered region. ANK repeat units follow at residues 66–95 (EMTPEIFGGMSNGEKECLEKLRSNGTPMER), 100–129 (TGDSILHIAAKWGHLELVKEIIFECPCLLF), 134–163 (SRQTPLHVATHGGHTKVVEALVASVTSALA), 182–211 (DGNTALYYAIEGRYLEMATCLVNADKDAPF), 216–248 (KGISSLYEAVDAGNKFEDLVKAILKTTDDNVDR), 260–290 (QGNKHLAHVALKAKSIGVLDVILDEYPSLMD), 295–325 (DGRTCLSYGASIGYYKGLCNILNRSTKGVYV), 329–358 (DGSFPIHSAAKNEHYEIIKEFIKRCPASKY), 363–391 (LGQNILHVAAKNEASLTAYMLMHDKDTKH), and 399–428 (DGNTPLHLAVMNWDFDSITCLASRNHEILK). Residues 457 to 477 (LALLLYAIHSSGFESVKSLTI) form a helical membrane-spanning segment. The Extracellular portion of the chain corresponds to 478 to 492 (QSVPLDPKKNRHYVN). A helical membrane pass occupies residues 493-513 (ALLVVAALVATVTFAAGFTIP). Residues 514–537 (GGYISDSKKPNLGRATLATNPTLF) are Cytoplasmic-facing. The chain crosses the membrane as a helical span at residues 538-558 (IFLLFDILAMQSSVATICTLI). At 559–577 (WAQLGDLALILKSLHVALP) the chain is on the extracellular side. A helical membrane pass occupies residues 578 to 598 (LLLFSLLCMPVAFLFGVITAI). The Cytoplasmic portion of the chain corresponds to 599 to 602 (AHVK). The helical transmembrane segment at 603-623 (WLLVTISIISGGFFLFAIFIL) threads the bilayer. Residues 624–638 (GPHVMLQRSHLPPSS) lie on the Extracellular side of the membrane. A helical membrane pass occupies residues 639–659 (GIFLKTFMLTIDISELFVILI). The Cytoplasmic portion of the chain corresponds to 660-670 (KACFGCVACSE).

Component of large complexes containing, at least, FLS2, HSP70 and ACD6 in endoplasmic reticulum, plasma membrane and soluble fraction. Associated with HSP70 proteins during endoplasmic reticulum-associated degradation (ERAD). Reduced complex levels upon benzothiazole (BTH) treatment. In terms of processing, ubiquitinated. As to expression, basal expression requires light and salicylic acid (SA).

It is found in the cell membrane. The protein resides in the endoplasmic reticulum membrane. In terms of biological role, dose-dependent activator of the defense response against virulent pathogens, including bacteria, fungi and oomycetes, that acts in a positive feedback loop with the defense signal salicylic acid (SA). Regulates the salicylic acid (SA) signaling pathway leading to cell death and modulating cell fate (e.g. cell enlargement and/or cell division). In response to SA signaling, triggers the accumulation of FLS2 at the plasma membrane, thus priming defenses. Involved in SA-dependent freezing signaling and tolerance. This Arabidopsis thaliana (Mouse-ear cress) protein is Protein ACCELERATED CELL DEATH 6.